Consider the following 697-residue polypeptide: MMRPVVVKEKQLNESQIHAVEDEVRQAKTMDRDIVTHAMKQSVAKLNPKVMIKNPIMFVVEIGFIITFILSFLPSSSSSIPGWFNITVSLILLFTVLFANFAEALAEGRGKAQADSLKQSKKDVFANVVKENGDIVQVSATDLRKGDVVIVKQGEMIPSDGEVIKGLASVDESAITGESAPVIKEAGGDFCSVTGGTMVVSDEITIVITSNPGESFIDKMISLVEGAARQKTPNEIALNTVLTSLTLIFLIVVVTLPIFTNYLGFQIDTAVLVALLVCLIPTTIGGLLSAIGIAGMDRVTKFNVLAMSGKAVEAAGDINTIILDKTGTITFGNRMAHTLLPVGNETIEQVGKWAAISSVLDETPEGRSVIEYVQGKSISYNRELAEQGEFVPFKAETRMSGVDLQDGTKVRKGAVGSVIEWVQSQGGTIPKDVNQKADFISKEGGTPLVVAVNNRIYGLIYLKDTVKPGMRERFEQLRQMGIKTVMCTGDNPLTAATIAKEAGVDEFVAECKPEDKIAVIKAEQDKGKLVAMTGDGTNDAPALAQADVGLAMNSGTTAAKEAANMIDLDSNPTKIIEVVGIGKQLLMTRGALTTFSIANDIAKYFAIIPAMFTLAIPQMEALNIMKLTSPLSAILSALIFNAVIIPLLIPLAMKGIAYKPMSSNALLSRNLLIYGLGGVIVPFIGIKVIDIIVGLFI.

The next 4 membrane-spanning stretches (helical) occupy residues 55–75, 79–99, 245–265, and 271–291; these read PIMF…FLPS, SIPG…VLFA, LTLI…YLGF, and VLVA…LSAI. Residue D324 is the 4-aspartylphosphate intermediate of the active site. ATP is bound by residues D361, E365, 393 to 400, and K412; that span reads FKAETRMS. Mg(2+)-binding residues include D535 and D539. Transmembrane regions (helical) follow at residues 605-625, 633-653, and 677-697; these read FAII…LNIM, AILS…PLAM, and GGVI…GLFI.

It belongs to the cation transport ATPase (P-type) (TC 3.A.3) family. Type IA subfamily. As to quaternary structure, the system is composed of three essential subunits: KdpA, KdpB and KdpC.

The protein localises to the cell membrane. The catalysed reaction is K(+)(out) + ATP + H2O = K(+)(in) + ADP + phosphate + H(+). Functionally, part of the high-affinity ATP-driven potassium transport (or Kdp) system, which catalyzes the hydrolysis of ATP coupled with the electrogenic transport of potassium into the cytoplasm. This subunit is responsible for energy coupling to the transport system and for the release of the potassium ions to the cytoplasm. In Bacillus cereus (strain ATCC 14579 / DSM 31 / CCUG 7414 / JCM 2152 / NBRC 15305 / NCIMB 9373 / NCTC 2599 / NRRL B-3711), this protein is Potassium-transporting ATPase ATP-binding subunit.